A 237-amino-acid chain; its full sequence is Photosystem I-associated linker protein CpcL (237 aa).

The PBS-linker domain occupies 11 to 191 (TTQNQRVQSF…DYRDRAGIVR (181 aa)). A helical transmembrane segment spans residues 208-228 (GVAILGVLLAISAGMTFLFVL).

This sequence belongs to the phycobilisome linker protein family. Part of a specialized phycobilisome (PBS), a structure that is usually composed of two distinct substructures: a core complex and a number of rods radiating from the core. This protein is part of a core-less PBS rod (called CpcL-PBS). In vegetative cells associated substoichiometrically with photosystem I and phycobiliproteins phycocyanin as well as phycoerythrocyanin in the thylakoid membrane, not found in conventional, hemidiscoidal phycobilisomes.

It localises to the cellular thylakoid membrane. Its function is as follows. Rod linker protein, associated with phycocyanin (PC). Linker polypeptides determine the state of aggregation and the location of the disk-shaped phycobiliprotein units within the phycobilisome (PBS) and modulate their spectroscopic properties in order to mediate a directed and optimal energy transfer. Forms a supercomplex with tetrameric photosystem I (PSI) and PC that allows efficient energy transfer from PC to PSI. This protein seems to be in the middle of the PC hexameric rod and may anchor the PC rods at the periphery of PSI tetramers. May be involved in the cyclic electron transport around PSI that provides ATP needed for N(2) fixation in heterocysts. The polypeptide is Photosystem I-associated linker protein CpcL (Nostoc sp. (strain PCC 7120 / SAG 25.82 / UTEX 2576)).